The sequence spans 122 residues: Large ribosomal subunit protein bL17 (122 aa).

Belongs to the bacterial ribosomal protein bL17 family. In terms of assembly, part of the 50S ribosomal subunit. Contacts protein L32.

In Neisseria gonorrhoeae (strain ATCC 700825 / FA 1090), this protein is Large ribosomal subunit protein bL17.